A 161-amino-acid chain; its full sequence is Allophycocyanin beta chain (161 aa).

Residue Asn71 is modified to N4-methylasparagine. Cys81 contributes to the (2R,3E)-phycocyanobilin binding site.

This sequence belongs to the phycobiliprotein family. In terms of assembly, heterodimer of an alpha and a beta chain. Post-translationally, contains one covalently linked phycocyanobilin chromophore.

The protein localises to the cellular thylakoid membrane. Functionally, light-harvesting photosynthetic bile pigment-protein from the phycobiliprotein complex. Allophycocyanin has a maximum absorption at approximately 650 nanometers. The sequence is that of Allophycocyanin beta chain (apcB) from Arthrospira platensis (Spirulina platensis).